We begin with the raw amino-acid sequence, 81 residues long: Costars family protein ABRACL (81 aa).

Met1 is modified (N-acetylmethionine).

Belongs to the costars family.

This Homo sapiens (Human) protein is Costars family protein ABRACL (ABRACL).